The chain runs to 242 residues: Ubiquinone biosynthesis O-methyltransferase (242 aa).

Residues Arg44, Gly64, Asp85, and Met129 each contribute to the S-adenosyl-L-methionine site.

The protein belongs to the methyltransferase superfamily. UbiG/COQ3 family.

The catalysed reaction is a 3-demethylubiquinol + S-adenosyl-L-methionine = a ubiquinol + S-adenosyl-L-homocysteine + H(+). It carries out the reaction a 3-(all-trans-polyprenyl)benzene-1,2-diol + S-adenosyl-L-methionine = a 2-methoxy-6-(all-trans-polyprenyl)phenol + S-adenosyl-L-homocysteine + H(+). Its pathway is cofactor biosynthesis; ubiquinone biosynthesis. O-methyltransferase that catalyzes the 2 O-methylation steps in the ubiquinone biosynthetic pathway. The protein is Ubiquinone biosynthesis O-methyltransferase of Salmonella typhi.